We begin with the raw amino-acid sequence, 78 residues long: Small ribosomal subunit protein eS17 (78 aa).

Belongs to the eukaryotic ribosomal protein eS17 family.

This Sulfurisphaera tokodaii (strain DSM 16993 / JCM 10545 / NBRC 100140 / 7) (Sulfolobus tokodaii) protein is Small ribosomal subunit protein eS17.